A 972-amino-acid polypeptide reads, in one-letter code: uncharacterized protein (972 aa).

A signal peptide spans 1–21 (MTNMILLSAVFLSLAILETHC). Topologically, residues 22–932 (ANHISTGIST…KELGEKLYHV (911 aa)) are extracellular. The interval 892–912 (EPTVTTTTESPPPPTTTTRQI) is disordered. Residues 933–953 (LFFMGVLTVSVAGGVIILSFI) traverse the membrane as a helical segment. Topologically, residues 954 to 972 (GCLIMRKMEDAPQKTKYSV) are cytoplasmic.

The protein localises to the host membrane. This is an uncharacterized protein from Magallana gigas (Pacific oyster).